The primary structure comprises 1106 residues: Probable LRR receptor-like serine/threonine-protein kinase At1g74360 (1106 aa).

Residues 1 to 34 (MTMVTRVIMTDDDSQSLCFLCFLLFFFITAIAVA) form the signal peptide. Topologically, residues 35 to 736 (GDSLDSDREV…PRTLLLIWIS (702 aa)) are extracellular. 7 LRR repeats span residues 86–109 (RSRVTGINLTDSTISGPLFKNFSA), 110–134 (LTELTYLDLSRNTIEGEIPDDLSRC), 136–156 (NLKHLNLSHNILEGELSLPGL), 157–182 (SNLEVLDLSLNRITGDIQSSFPLFCN), 184–204 (LVVANLSTNNFTGRIDDIFNG), 205–226 (CRNLKYVDFSSNRFSGEVWTGF), and 227–250 (GRLVEFSVADNHLSGNISASMFRG). Residues N93 and N106 are each glycosylated (N-linked (GlcNAc...) asparagine). Residue N141 is glycosylated (N-linked (GlcNAc...) asparagine). N-linked (GlcNAc...) asparagine glycans are attached at residues N188 and N193. 2 N-linked (GlcNAc...) asparagine glycosylation sites follow: N242 and N251. 15 LRR repeats span residues 252–275 (CTLQMLDLSGNAFGGEFPGQVSNC), 276–299 (QNLNVLNLWGNKFTGNIPAEIGSI), 300–323 (SSLKGLYLGNNTFSRDIPETLLNL), 325–346 (NLVFLDLSRNKFGGDIQEIFGR), 348–371 (TQVKYLVLHANSYVGGINSSNILK), 372–396 (LPNLSRLDLGYNNFSGQLPTEISQI), 398–419 (SLKFLILAYNNFSGDIPQEYGN), 420–443 (MPGLQALDLSFNKLTGSIPASFGK), 445–468 (TSLLWLMLANNSLSGEIPREIGNC), 470–492 (SLLWFNVANNQLSGRFHPELTRM), 566–593 (VRTLKISAYLQLSGNKFSGEIPASISQM), 594–617 (DRLSTLHLGFNEFEGKLPPEIGQL), 619–640 (LAFLNLTRNNFSGEIPQEIGNL), 641–664 (KCLQNLDLSFNNFSGNFPTSLNDL), and 666–690 (ELSKFNISYNPFISGAIPTTGQVAT). N309 and N322 each carry an N-linked (GlcNAc...) asparagine glycan. N-linked (GlcNAc...) asparagine glycans are attached at residues N365, N374, N384, and N408. N454 and N467 each carry an N-linked (GlcNAc...) asparagine glycan. N623, N628, N652, N671, N709, and N713 each carry an N-linked (GlcNAc...) asparagine glycan. Residues 737–757 (LALALAFIACLVVSGIVLMVV) traverse the membrane as a helical segment. Residues 758–1106 (KASREAEIDL…GLSSQGYIEM (349 aa)) lie on the Cytoplasmic side of the membrane. A phosphothreonine mark is found at T803 and T811. In terms of domain architecture, Protein kinase spans 814-1095 (FSEERVVGRG…VKISGKAELF (282 aa)). ATP contacts are provided by residues 820–828 (VGRGGYGTV) and K842. The active-site Proton acceptor is the D941. Y983 bears the Phosphotyrosine mark. The residue at position 991 (T991) is a Phosphothreonine.

This sequence belongs to the protein kinase superfamily. Ser/Thr protein kinase family.

The protein resides in the mitochondrion membrane. It carries out the reaction L-seryl-[protein] + ATP = O-phospho-L-seryl-[protein] + ADP + H(+). The catalysed reaction is L-threonyl-[protein] + ATP = O-phospho-L-threonyl-[protein] + ADP + H(+). The sequence is that of Probable LRR receptor-like serine/threonine-protein kinase At1g74360 from Arabidopsis thaliana (Mouse-ear cress).